The primary structure comprises 364 residues: DNA-(apurinic or apyrimidinic site) endonuclease (364 aa).

Composition is skewed to basic and acidic residues over residues 1 to 12 (MKRFFKPIEKEN) and 23 to 39 (PEKR…EKNQ). The segment at 1–42 (MKRFFKPIEKENSPAAKKPCLSPEKRDGDGDGVEEEKNQNEP) is disordered. Glutamate 80 is a Mg(2+) binding site. Residue tyrosine 182 is part of the active site. Positions 222, 224, and 342 each coordinate Mg(2+). The Proton donor/acceptor role is filled by aspartate 222.

Belongs to the DNA repair enzymes AP/exoA family. As to quaternary structure, interacts with ROS1. ROS1 is required for APE1L to stably associate with the DNA substrate. Mg(2+) is required as a cofactor. In terms of tissue distribution, expressed in leaves, flower buds and developing siliques. Not detected in roots.

The protein localises to the nucleus. Its subcellular location is the nucleolus. In terms of biological role, apurinic/apyrimidinic (AP) endonuclease involved in active DNA demethylation and gene imprinting. According to a report, also displays an in vitro 3'-phosphatase activity. According to another report, has no in vitro 3'-phosphatase activity. Catalyzes the conversion of the 3'-blocking groups 3'-phosphor-alpha,beta-unsaturated aldehyde (3'-PUA) generated by ROS1 to 3'-OH. Has a strong non-specific affinity to DNA. Redundant with APE2 and at least one functional allele is required for seed viability. The polypeptide is DNA-(apurinic or apyrimidinic site) endonuclease (Arabidopsis thaliana (Mouse-ear cress)).